A 516-amino-acid polypeptide reads, in one-letter code: Calcitonin receptor (516 aa).

The N-terminal stretch at methionine 1–glutamine 24 is a signal peptide. Topologically, residues alanine 25 to tyrosine 146 are extracellular. 4 N-linked (GlcNAc...) asparagine glycosylation sites follow: asparagine 28, asparagine 73, asparagine 125, and asparagine 130. 3 disulfide bridges follow: cysteine 55-cysteine 81, cysteine 72-cysteine 112, and cysteine 95-cysteine 134. The helical transmembrane segment at valine 147–isoleucine 169 threads the bilayer. Residues phenylalanine 170–valine 181 are Cytoplasmic-facing. The chain crosses the membrane as a helical span at residues threonine 182 to leucine 202. The Extracellular segment spans residues valine 203–cysteine 256. A disulfide bridge connects residues cysteine 256 and cysteine 326. The chain crosses the membrane as a helical span at residues lysine 257–isoleucine 279. Topologically, residues tyrosine 280–leucine 296 are cytoplasmic. A helical transmembrane segment spans residues arginine 297–threonine 317. The Extracellular segment spans residues arginine 318–histidine 333. The chain crosses the membrane as a helical span at residues leucine 334 to valine 357. Residues arginine 358 to lysine 377 lie on the Cytoplasmic side of the membrane. The chain crosses the membrane as a helical span at residues alanine 378–phenylalanine 396. Residues proline 397–valine 404 lie on the Extracellular side of the membrane. A helical membrane pass occupies residues leucine 405–cysteine 431. Topologically, residues asparagine 432–alanine 516 are cytoplasmic. A disordered region spans residues arginine 489–alanine 516.

It belongs to the G-protein coupled receptor 2 family. In terms of assembly, heterodimer of CALCR and RAMP1, RAMP2 or RAMP3; the receptor complexes function as AMYR1, AMYR2 and AMYR3 receptors, respectively, and respond to amylin/IAPP, calcitonin/CT and CGRP1 ligands. Interacts with GPRASP2.

The protein localises to the cell membrane. Functionally, g protein-coupled receptor activated by ligand peptides amylin (IAPP), calcitonin (CT/CALCA) and calcitonin gene-related peptide type 1 (CGRP1/CALCA). CALCR interacts with receptor-activity-modifying proteins RAMP1, 2 and 3 to form receptor complexes AMYR1, 2 and 3, respectively. IAPP, CT and CGRP1 activate CALCR and AMYRs with distinct modes of receptor activation resulting in specific phenotypes. Ligand binding causes a conformation change that triggers signaling via guanine nucleotide-binding proteins (G proteins) and modulates the activity of downstream effectors. Activates cAMP-dependent pathway. This Rattus norvegicus (Rat) protein is Calcitonin receptor.